A 384-amino-acid chain; its full sequence is MNNLVNLLDLDADALTAYCGELGEKPFRARQLQRWIHQFGASHFDAMTDLAKSLREKLATRAEIRSPAAISDHTSSDGTRKWLLDVGAGNAVETVYIPEDTRGTLCVSSQAGCAVNCRFCSTGKQGFSRNLSTGEIIGQLWMAEFAMRAQLGRGPKDERVISNVVMMGMGEPLLNYDAVVPAMRLMLDDNAYGLSRRRVTLSTSGVVPMMDRLSKDLPVALAVSLHASNDALRDVLVPLNRKYPLAELMAACRRYLEFAPRDFITFEYCMLDGVNDGVEHARELLKLVADVPCKFNLIPFNPFPESGLKRSNNEQIRRFAQVLMDAGIVTTIRKTRGDDIDAACGQLAGEVMDRTRLAERGKFGKITPLVPVADAGAPREARPA.

Residue Glu93 is the Proton acceptor of the active site. The region spanning 99–339 (EDTRGTLCVS…TTIRKTRGDD (241 aa)) is the Radical SAM core domain. Cys106 and Cys344 are joined by a disulfide. [4Fe-4S] cluster contacts are provided by Cys113, Cys117, and Cys120. S-adenosyl-L-methionine contacts are provided by residues 170-171 (GE), Ser202, 224-226 (SLH), and Asn301. Cys344 acts as the S-methylcysteine intermediate in catalysis.

It belongs to the radical SAM superfamily. RlmN family. [4Fe-4S] cluster is required as a cofactor.

Its subcellular location is the cytoplasm. It carries out the reaction adenosine(2503) in 23S rRNA + 2 reduced [2Fe-2S]-[ferredoxin] + 2 S-adenosyl-L-methionine = 2-methyladenosine(2503) in 23S rRNA + 5'-deoxyadenosine + L-methionine + 2 oxidized [2Fe-2S]-[ferredoxin] + S-adenosyl-L-homocysteine. It catalyses the reaction adenosine(37) in tRNA + 2 reduced [2Fe-2S]-[ferredoxin] + 2 S-adenosyl-L-methionine = 2-methyladenosine(37) in tRNA + 5'-deoxyadenosine + L-methionine + 2 oxidized [2Fe-2S]-[ferredoxin] + S-adenosyl-L-homocysteine. Its function is as follows. Specifically methylates position 2 of adenine 2503 in 23S rRNA and position 2 of adenine 37 in tRNAs. m2A2503 modification seems to play a crucial role in the proofreading step occurring at the peptidyl transferase center and thus would serve to optimize ribosomal fidelity. The polypeptide is Dual-specificity RNA methyltransferase RlmN (Cupriavidus metallidurans (strain ATCC 43123 / DSM 2839 / NBRC 102507 / CH34) (Ralstonia metallidurans)).